Here is a 479-residue protein sequence, read N- to C-terminus: Kynurenine 3-monooxygenase (479 aa).

This sequence belongs to the aromatic-ring hydroxylase family. KMO subfamily. FAD serves as cofactor.

Its subcellular location is the mitochondrion outer membrane. It carries out the reaction L-kynurenine + NADPH + O2 + H(+) = 3-hydroxy-L-kynurenine + NADP(+) + H2O. It functions in the pathway cofactor biosynthesis; NAD(+) biosynthesis; quinolinate from L-kynurenine: step 1/3. Its function is as follows. Catalyzes the hydroxylation of L-kynurenine (L-Kyn) to form 3-hydroxy-L-kynurenine (L-3OHKyn). Required for synthesis of quinolinic acid. This is Kynurenine 3-monooxygenase from Chaetomium globosum (strain ATCC 6205 / CBS 148.51 / DSM 1962 / NBRC 6347 / NRRL 1970) (Soil fungus).